Reading from the N-terminus, the 541-residue chain is Chaperonin GroEL, cyanelle (541 aa).

ATP-binding positions include threonine 29 to proline 32, aspartate 86 to threonine 90, glycine 413, asparagine 479 to alanine 481, and aspartate 495.

It belongs to the chaperonin (HSP60) family. As to quaternary structure, forms a cylinder of 14 subunits composed of two heptameric rings stacked back-to-back. Interacts with the co-chaperonin GroES.

The protein resides in the plastid. It is found in the cyanelle. The enzyme catalyses ATP + H2O + a folded polypeptide = ADP + phosphate + an unfolded polypeptide.. Its function is as follows. Together with its co-chaperonin GroES, plays an essential role in assisting protein folding. The GroEL-GroES system forms a nano-cage that allows encapsulation of the non-native substrate proteins and provides a physical environment optimized to promote and accelerate protein folding. The protein is Chaperonin GroEL, cyanelle of Cyanophora paradoxa.